The primary structure comprises 37 residues: Large ribosomal subunit protein bL36c (37 aa).

Belongs to the bacterial ribosomal protein bL36 family.

It localises to the plastid. The protein resides in the chloroplast. This is Large ribosomal subunit protein bL36c from Ostreococcus tauri.